The sequence spans 418 residues: MQETIRNTFKSVRQASRELVMIGEQAINSILIDLAETIPDCSSSILEANRRDLDRMDPADPMFDRLLLNEKRLEIIAADIRNVATLPSPLDIVLEQRRLPNGLELKKITVPIGVIGIIYEARPNVTFDVFALCLKSGNATVLKGGSDAHESNTAIVECIKTVLRRNGINDNTLSLLPSEREAAGIMLNAVDSIDMIIPRGSQKLIDFVRQNAKVPVIETGAGIVHTYIDKNADTGIAAKVIFNAKTRRPSVCNALDTLLVHAAKLDDLPQITAPLQEKKVVIYADEAAYAKLQGSYPESLLERARPEHFGTEFLSLKLSVKTVSSIEEALDHIAEYSSRHSEAIITNDPEAKAEFLKRVDAAVVYANTSTAFTDGAQFGLGAEIGISTQKLHARGPMALKELTSYKWIIEGDGQTRSV.

The protein belongs to the gamma-glutamyl phosphate reductase family.

It is found in the cytoplasm. The catalysed reaction is L-glutamate 5-semialdehyde + phosphate + NADP(+) = L-glutamyl 5-phosphate + NADPH + H(+). Its pathway is amino-acid biosynthesis; L-proline biosynthesis; L-glutamate 5-semialdehyde from L-glutamate: step 2/2. Functionally, catalyzes the NADPH-dependent reduction of L-glutamate 5-phosphate into L-glutamate 5-semialdehyde and phosphate. The product spontaneously undergoes cyclization to form 1-pyrroline-5-carboxylate. This is Gamma-glutamyl phosphate reductase from Chlorobium limicola (strain DSM 245 / NBRC 103803 / 6330).